Consider the following 200-residue polypeptide: Holliday junction branch migration complex subunit RuvA (200 aa).

A domain I region spans residues 1 to 63 (MYAYVKGKLT…EDAQLLYGFS (63 aa)). Residues 64 to 142 (SEEEKDMFLS…ITEEDSDSLL (79 aa)) are domain II. A flexible linker region spans residues 143–149 (QVDATST). A domain III region spans residues 150-200 (VQDQFVQEAMLALEALGYSKRELAKVEKTLNKNKYDSVDEAVKAGLQLVVS).

It belongs to the RuvA family. In terms of assembly, homotetramer. Forms an RuvA(8)-RuvB(12)-Holliday junction (HJ) complex. HJ DNA is sandwiched between 2 RuvA tetramers; dsDNA enters through RuvA and exits via RuvB. An RuvB hexamer assembles on each DNA strand where it exits the tetramer. Each RuvB hexamer is contacted by two RuvA subunits (via domain III) on 2 adjacent RuvB subunits; this complex drives branch migration. In the full resolvosome a probable DNA-RuvA(4)-RuvB(12)-RuvC(2) complex forms which resolves the HJ.

The protein resides in the cytoplasm. The RuvA-RuvB-RuvC complex processes Holliday junction (HJ) DNA during genetic recombination and DNA repair, while the RuvA-RuvB complex plays an important role in the rescue of blocked DNA replication forks via replication fork reversal (RFR). RuvA specifically binds to HJ cruciform DNA, conferring on it an open structure. The RuvB hexamer acts as an ATP-dependent pump, pulling dsDNA into and through the RuvAB complex. HJ branch migration allows RuvC to scan DNA until it finds its consensus sequence, where it cleaves and resolves the cruciform DNA. This Staphylococcus aureus (strain Mu3 / ATCC 700698) protein is Holliday junction branch migration complex subunit RuvA.